Reading from the N-terminus, the 267-residue chain is Malonyl-[acyl-carrier protein] O-methyltransferase (267 aa).

The protein belongs to the methyltransferase superfamily.

It carries out the reaction malonyl-[ACP] + S-adenosyl-L-methionine = malonyl-[ACP] methyl ester + S-adenosyl-L-homocysteine. The protein operates within cofactor biosynthesis; biotin biosynthesis. Functionally, converts the free carboxyl group of a malonyl-thioester to its methyl ester by transfer of a methyl group from S-adenosyl-L-methionine (SAM). It allows to synthesize pimeloyl-ACP via the fatty acid synthetic pathway. This is Malonyl-[acyl-carrier protein] O-methyltransferase from Geobacter sulfurreducens (strain ATCC 51573 / DSM 12127 / PCA).